Reading from the N-terminus, the 224-residue chain is Envelope glycoprotein L (224 aa).

A signal peptide spans 1 to 22 (MGILGWVGLIAVGVLCVRGGLS). Residues 20-161 (GLSSTEYVIR…FDYSRTRRCV (142 aa)) form an interaction with gH region. The interval 20–161 (GLSSTEYVIR…FDYSRTRRCV (142 aa)) is interaction with gL. In terms of domain architecture, gL alphaherpesvirus-type spans 23–201 (STEYVIRSRV…LTTPPPIIAT (179 aa)). 2 disulfide bridges follow: C44/C76 and C149/C160. The interval 161–224 (VGRQDLGPTN…RRRRPHSRRL (64 aa)) is disordered. The N-linked (GlcNAc...) asparagine; by host glycan is linked to N170. Over residues 213 to 224 (KSRRRRPHSRRL) the composition is skewed to basic residues.

The protein belongs to the herpesviridae glycoprotein L (gL) family. Alphaherpesvirinae gL subfamily. As to quaternary structure, interacts with glycoprotein H (gH); this interaction is necessary for the correct processing and cell surface expression of gH. The heterodimer gH/gL seems to interact with gB trimers during fusion. N-glycosylated, O-glycosylated, and sialylated.

The protein localises to the virion membrane. The protein resides in the host cell membrane. It localises to the host Golgi apparatus. It is found in the host trans-Golgi network. Functionally, the heterodimer glycoprotein H-glycoprotein L is required for the fusion of viral and plasma membranes leading to virus entry into the host cell. Acts as a functional inhibitor of gH and maintains gH in an inhibited form. Upon binding to host integrins, gL dissociates from gH leading to activation of the viral fusion glycoproteins gB and gH. This chain is Envelope glycoprotein L, found in Human herpesvirus 1 (strain KOS) (HHV-1).